The primary structure comprises 522 residues: Sorting nexin-1 (522 aa).

Disordered regions lie at residues 1-89 (MASG…QDLF) and 115-142 (SLPP…QEDQ). Phosphoserine occurs at positions 32 and 39. Over residues 35–45 (EAGDSDTEGED) the composition is skewed to acidic residues. Residues threonine 41 and threonine 48 each carry the phosphothreonine modification. A phosphoserine mark is found at serine 58 and serine 72. Residues 60–73 (KRTTSLLPINNGSK) are compositionally biased toward polar residues. The span at 132-142 (EELEEEEQEDQ) shows a compositional bias: acidic residues. The PX domain maps to 143–272 (FDLTVGITDP…EFLEKEELPR (130 aa)). Positions 186, 188, and 214 each coordinate a 1,2-diacyl-sn-glycero-3-phospho-(1D-myo-inositol-3-phosphate). Serine 188 carries the post-translational modification Phosphoserine. Residue lysine 237 is modified to N6-acetyllysine. Arginine 238 contributes to the a 1,2-diacyl-sn-glycero-3-phospho-(1D-myo-inositol-3-phosphate) binding site. The residue at position 280 (serine 280) is a Phosphoserine. The tract at residues 281–298 (GAGLLKMFNKATDAVSKM) is membrane-binding amphipathic helix. The BAR domain maps to 302–522 (MNESDIWFEE…AFLPEAKAIS (221 aa)).

This sequence belongs to the sorting nexin family. As to quaternary structure, predominantly forms heterodimers with BAR domain-containing sorting nexins SNX5, SNX6 and SNX32; can self-associate to form homodimers. The heterodimers are proposed to self-assemble into helical arrays on the membrane to stabilize and expand local membrane curvature underlying endosomal tubule formation. Thought to be a component of the originally described retromer complex (also called SNX-BAR retromer) which is a pentamer containing the heterotrimeric retromer cargo-selective complex (CSC), also described as vacuolar protein sorting subcomplex (VPS) and a heterodimeric membrane-deforming subcomplex formed between SNX1 or SNX2 and SNX5 or SNX6 (also called SNX-BAR subcomplex); the respective CSC and SNX-BAR subcomplexes associate with low affinity. Interacts with SNX5, SNX6, SNX32, VPS26A, VPS29, VPS35, DRD5, DENND5A, KALRN, RHOG (GDP-bound form). The interaction with SNX2 is reported controversially. Interacts with DNAJC13; prevented by presence of HGS. Interacts with HGS.

It is found in the endosome membrane. The protein resides in the golgi apparatus. The protein localises to the trans-Golgi network membrane. It localises to the early endosome membrane. Its subcellular location is the cell projection. It is found in the lamellipodium. Functionally, involved in several stages of intracellular trafficking. Interacts with membranes containing phosphatidylinositol 3-phosphate (PtdIns(3P)) or phosphatidylinositol 3,5-bisphosphate (PtdIns(3,5)P2). Acts in part as component of the retromer membrane-deforming SNX-BAR subcomplex. The SNX-BAR retromer mediates retrograde transport of cargo proteins from endosomes to the trans-Golgi network (TGN) and is involved in endosome-to-plasma membrane transport for cargo protein recycling. The SNX-BAR subcomplex functions to deform the donor membrane into a tubular profile called endosome-to-TGN transport carrier (ETC). Can sense membrane curvature and has in vitro vesicle-to-membrane remodeling activity. Involved in retrograde endosome-to-TGN transport of lysosomal enzyme receptors (IGF2R, M6PR and SORT1). Plays a role in targeting ligand-activated EGFR to the lysosomes for degradation after endocytosis from the cell surface and release from the Golgi. Involvement in retromer-independent endocytic trafficking of P2RY1 and lysosomal degradation of protease-activated receptor-1/F2R. Promotes KALRN- and RHOG-dependent but retromer-independent membrane remodeling such as lamellipodium formation; the function is dependent on GEF activity of KALRN. Required for endocytosis of DRD5 upon agonist stimulation but not for basal receptor trafficking. This Macaca fascicularis (Crab-eating macaque) protein is Sorting nexin-1 (SNX1).